The sequence spans 77 residues: Large ribosomal subunit protein uL24c (77 aa).

It belongs to the universal ribosomal protein uL24 family. As to quaternary structure, part of the 50S ribosomal subunit.

Its subcellular location is the plastid. It localises to the chloroplast. In terms of biological role, one of two assembly initiator proteins, it binds directly to the 5'-end of the 23S rRNA, where it nucleates assembly of the 50S subunit. The sequence is that of Large ribosomal subunit protein uL24c (rpl24) from Trieres chinensis (Marine centric diatom).